Consider the following 196-residue polypeptide: Small ribosomal subunit protein uS4c (196 aa).

Residues Ala17 to Ser38 are disordered. A compositionally biased stretch (basic residues) spans Lys24–Ser38. One can recognise an S4 RNA-binding domain in the interval Met89–Leu169.

The protein belongs to the universal ribosomal protein uS4 family. Part of the 30S ribosomal subunit. Contacts protein S5. The interaction surface between S4 and S5 is involved in control of translational fidelity.

The protein localises to the plastid. It is found in the chloroplast. Functionally, one of the primary rRNA binding proteins, it binds directly to 16S rRNA where it nucleates assembly of the body of the 30S subunit. With S5 and S12 plays an important role in translational accuracy. This chain is Small ribosomal subunit protein uS4c (rps4), found in Lygeum spartum.